We begin with the raw amino-acid sequence, 438 residues long: Adenylosuccinate synthetase (438 aa).

GTP is bound by residues 13–19 and 41–43; these read GDEGKGK and GHT. Residue D14 is the Proton acceptor of the active site. The Mg(2+) site is built by D14 and G41. Residues 14-17, 39-42, T130, R144, Q225, T240, and R310 each bind IMP; these read DEGK and NAGH. H42 functions as the Proton donor in the catalytic mechanism. 306–312 contacts substrate; sequence ATTGRLR. GTP is bound by residues R312, 338 to 340, and 421 to 423; these read KLD and STG.

Belongs to the adenylosuccinate synthetase family. In terms of assembly, homodimer. Requires Mg(2+) as cofactor.

It localises to the cytoplasm. It carries out the reaction IMP + L-aspartate + GTP = N(6)-(1,2-dicarboxyethyl)-AMP + GDP + phosphate + 2 H(+). Its pathway is purine metabolism; AMP biosynthesis via de novo pathway; AMP from IMP: step 1/2. Plays an important role in the de novo pathway of purine nucleotide biosynthesis. Catalyzes the first committed step in the biosynthesis of AMP from IMP. This Vibrio vulnificus (strain YJ016) protein is Adenylosuccinate synthetase.